The primary structure comprises 333 residues: Receptor polysaccharide phosphotransferase WefC (333 aa).

Belongs to the stealth family.

Functionally, part of the type 2Gn receptor polysaccharide (RPS) biosynthesis locus. Essential for cell surface RPS production, and for synthesis of the host-like GalNAc beta 1-3Gal (Gn) motif of the RPS. Probably encodes a 1-3Gal alpha transferase. This chain is Receptor polysaccharide phosphotransferase WefC (wefC), found in Streptococcus gordonii.